Consider the following 201-residue polypeptide: Mediator of RNA polymerase II transcription subunit 19 (201 aa).

The segment at 166-201 (GTGKSNAKKRKNRSNGSSMATPNSEMQDDVKRRRLE) is disordered.

Belongs to the Mediator complex subunit 19 family. In terms of assembly, component of the Mediator complex.

It localises to the nucleus. Its function is as follows. Component of the Mediator complex, a coactivator involved in the regulated transcription of nearly all RNA polymerase II-dependent genes. Mediator functions as a bridge to convey information from gene-specific regulatory proteins to the basal RNA polymerase II transcription machinery. Mediator is recruited to promoters by direct interactions with regulatory proteins and serves as a scaffold for the assembly of a functional preinitiation complex with RNA polymerase II and the general transcription factors. This Candida glabrata (strain ATCC 2001 / BCRC 20586 / JCM 3761 / NBRC 0622 / NRRL Y-65 / CBS 138) (Yeast) protein is Mediator of RNA polymerase II transcription subunit 19 (ROX3).